Consider the following 326-residue polypeptide: Malate dehydrogenase (326 aa).

11–17 (GAAGQIG) contributes to the NAD(+) binding site. Arginine 92 and arginine 98 together coordinate substrate. Residues asparagine 105, glutamine 112, and 129–131 (VGN) each bind NAD(+). Residues asparagine 131 and arginine 162 each contribute to the substrate site. The Proton acceptor role is filled by histidine 187.

Belongs to the LDH/MDH superfamily. MDH type 2 family.

The catalysed reaction is (S)-malate + NAD(+) = oxaloacetate + NADH + H(+). Catalyzes the reversible oxidation of malate to oxaloacetate. The sequence is that of Malate dehydrogenase from Chromobacterium violaceum (strain ATCC 12472 / DSM 30191 / JCM 1249 / CCUG 213 / NBRC 12614 / NCIMB 9131 / NCTC 9757 / MK).